We begin with the raw amino-acid sequence, 192 residues long: Peptidyl-tRNA hydrolase (192 aa).

Residue Tyr14 coordinates tRNA. His19 acts as the Proton acceptor in catalysis. Residues Tyr64, Asn66, and Asn112 each coordinate tRNA.

This sequence belongs to the PTH family. In terms of assembly, monomer.

It localises to the cytoplasm. The enzyme catalyses an N-acyl-L-alpha-aminoacyl-tRNA + H2O = an N-acyl-L-amino acid + a tRNA + H(+). Functionally, hydrolyzes ribosome-free peptidyl-tRNAs (with 1 or more amino acids incorporated), which drop off the ribosome during protein synthesis, or as a result of ribosome stalling. Catalyzes the release of premature peptidyl moieties from peptidyl-tRNA molecules trapped in stalled 50S ribosomal subunits, and thus maintains levels of free tRNAs and 50S ribosomes. This chain is Peptidyl-tRNA hydrolase, found in Anaeromyxobacter dehalogenans (strain 2CP-C).